A 404-amino-acid polypeptide reads, in one-letter code: Probable tRNA sulfurtransferase (404 aa).

Residues 60 to 165 (TAVAESLKQV…EEAAYLSYET (106 aa)) enclose the THUMP domain. ATP contacts are provided by residues 183-184 (ML), 208-209 (HF), arginine 265, glycine 287, and glutamine 296.

This sequence belongs to the ThiI family.

The protein localises to the cytoplasm. It carries out the reaction [ThiI sulfur-carrier protein]-S-sulfanyl-L-cysteine + a uridine in tRNA + 2 reduced [2Fe-2S]-[ferredoxin] + ATP + H(+) = [ThiI sulfur-carrier protein]-L-cysteine + a 4-thiouridine in tRNA + 2 oxidized [2Fe-2S]-[ferredoxin] + AMP + diphosphate. The enzyme catalyses [ThiS sulfur-carrier protein]-C-terminal Gly-Gly-AMP + S-sulfanyl-L-cysteinyl-[cysteine desulfurase] + AH2 = [ThiS sulfur-carrier protein]-C-terminal-Gly-aminoethanethioate + L-cysteinyl-[cysteine desulfurase] + A + AMP + 2 H(+). It functions in the pathway cofactor biosynthesis; thiamine diphosphate biosynthesis. In terms of biological role, catalyzes the ATP-dependent transfer of a sulfur to tRNA to produce 4-thiouridine in position 8 of tRNAs, which functions as a near-UV photosensor. Also catalyzes the transfer of sulfur to the sulfur carrier protein ThiS, forming ThiS-thiocarboxylate. This is a step in the synthesis of thiazole, in the thiamine biosynthesis pathway. The sulfur is donated as persulfide by IscS. The polypeptide is Probable tRNA sulfurtransferase (Streptococcus pneumoniae serotype 19F (strain G54)).